We begin with the raw amino-acid sequence, 78 residues long: MAAVCQVTGATPGFGHSISHSHRRTKRRFDPNIQKKTYYVPSLRRNVTLTLSAKGIKVIDARGIEAVVKDLLARGEKI.

The protein belongs to the bacterial ribosomal protein bL28 family.

This chain is Large ribosomal subunit protein bL28, found in Leifsonia xyli subsp. xyli (strain CTCB07).